Here is a 388-residue protein sequence, read N- to C-terminus: Succinate--CoA ligase [ADP-forming] subunit beta (388 aa).

The region spanning 9–244 (KQLFAEYGLP…PSQDDAREAH (236 aa)) is the ATP-grasp domain. ATP contacts are provided by residues Lys46, 53–55 (GRG), Glu99, Thr102, and Glu107. Residues Asn199 and Asp213 each contribute to the Mg(2+) site. Substrate is bound by residues Asn264 and 321–323 (GIV).

Belongs to the succinate/malate CoA ligase beta subunit family. As to quaternary structure, heterotetramer of two alpha and two beta subunits. Mg(2+) serves as cofactor.

It catalyses the reaction succinate + ATP + CoA = succinyl-CoA + ADP + phosphate. It carries out the reaction GTP + succinate + CoA = succinyl-CoA + GDP + phosphate. It functions in the pathway carbohydrate metabolism; tricarboxylic acid cycle; succinate from succinyl-CoA (ligase route): step 1/1. Functionally, succinyl-CoA synthetase functions in the citric acid cycle (TCA), coupling the hydrolysis of succinyl-CoA to the synthesis of either ATP or GTP and thus represents the only step of substrate-level phosphorylation in the TCA. The beta subunit provides nucleotide specificity of the enzyme and binds the substrate succinate, while the binding sites for coenzyme A and phosphate are found in the alpha subunit. In Pseudomonas putida (strain ATCC 700007 / DSM 6899 / JCM 31910 / BCRC 17059 / LMG 24140 / F1), this protein is Succinate--CoA ligase [ADP-forming] subunit beta.